The primary structure comprises 429 residues: Enolase (429 aa).

Gln-163 contacts (2R)-2-phosphoglycerate. The active-site Proton donor is Glu-205. Residues Asp-242, Glu-286, and Asp-313 each contribute to the Mg(2+) site. (2R)-2-phosphoglycerate-binding residues include Lys-338, Arg-367, Ser-368, and Lys-389. Lys-338 functions as the Proton acceptor in the catalytic mechanism.

The protein belongs to the enolase family. Mg(2+) serves as cofactor.

Its subcellular location is the cytoplasm. The protein localises to the secreted. It is found in the cell surface. It carries out the reaction (2R)-2-phosphoglycerate = phosphoenolpyruvate + H2O. It participates in carbohydrate degradation; glycolysis; pyruvate from D-glyceraldehyde 3-phosphate: step 4/5. Functionally, catalyzes the reversible conversion of 2-phosphoglycerate (2-PG) into phosphoenolpyruvate (PEP). It is essential for the degradation of carbohydrates via glycolysis. The polypeptide is Enolase (Thermoanaerobacter sp. (strain X514)).